The chain runs to 307 residues: tRNA pseudouridine synthase B (307 aa).

Asp39 acts as the Nucleophile in catalysis.

It belongs to the pseudouridine synthase TruB family. Type 1 subfamily.

It catalyses the reaction uridine(55) in tRNA = pseudouridine(55) in tRNA. Its function is as follows. Responsible for synthesis of pseudouridine from uracil-55 in the psi GC loop of transfer RNAs. This chain is tRNA pseudouridine synthase B, found in Lactiplantibacillus plantarum (strain ATCC BAA-793 / NCIMB 8826 / WCFS1) (Lactobacillus plantarum).